The sequence spans 331 residues: MRRLVNDGYEAVEEMLAGYVAAQGKYVDFAENDKRVIVSKQMSEEPRVRIIVGGGSGHEPLFLGYVGKDFADAAVVGNINTSPSPEPCYNAVKAVDSGKGCLYMYGNYAGDVMNFDMGAEMAADDGIRVETVLVTDDIYSAENVEDRRGVAGDLIVFKAAASAAAKGLDLDAVKQAAEKANANTFSMGVALSSSTLPVTGKAIFEMKEGEMEVGMGIHGEPGIKRTSIEPADKVVDQIMGYLIEEMKLTAGEEVHVLINGLGGLPVMDQYICYRRVDEILKEKGVHIHSPLVGNYATSMDMIGMSITLVRLDDELKDLLDTPCDTPYFKVD.

A DhaK domain is found at 7 to 328; sequence DGYEAVEEML…LDTPCDTPYF (322 aa). Residues 55 to 58 and Asp-111 contribute to the dihydroxyacetone site; that span reads GSGH. His-58 acts as the Proton acceptor in catalysis. The active-site Tele-hemiaminal-histidine intermediate is His-218.

In terms of assembly, homodimer. The dihydroxyacetone kinase complex is composed of a homodimer of DhaM, a homodimer of DhaK and the subunit DhaL.

It is found in the cytoplasm. The enzyme catalyses dihydroxyacetone + phosphoenolpyruvate = dihydroxyacetone phosphate + pyruvate. The protein operates within polyol metabolism; glycerol degradation. Dihydroxyacetone binding subunit of the dihydroxyacetone kinase, which is responsible for the phosphoenolpyruvate (PEP)-dependent phosphorylation of dihydroxyacetone via a phosphoryl group transfer from DhaL-ATP. The sequence is that of PTS-dependent dihydroxyacetone kinase 2, dihydroxyacetone-binding subunit DhaK from Listeria innocua serovar 6a (strain ATCC BAA-680 / CLIP 11262).